We begin with the raw amino-acid sequence, 140 residues long: MAGWNAYIDNLMADGTCQDAAIVGYKDSPSVWAAVPGKTFVNITPAEVGVLVGKDRSSFYVNGLTLGGQKCSVIRDSLLQDGEFSMDLRTKSTGGAPTFNVTVTKTDKTLVLLMGKEGVHGGLINKKCYEMASHLRRSQY.

A2 carries the post-translational modification N-acetylalanine. S28 is subject to Phosphoserine. Residue K54 forms a Glycyl lysine isopeptide (Lys-Gly) (interchain with G-Cter in SUMO2); alternate linkage. K54 is covalently cross-linked (Glycyl lysine isopeptide (Lys-Gly) (interchain with G-Cter in ubiquitin); alternate). Phosphoserine is present on residues S57 and S85. 2 positions are modified to N6-acetyllysine: K105 and K108. Phosphotyrosine is present on Y129. A Phosphoserine; by ROCK1 modification is found at S138.

Belongs to the profilin family. As to quaternary structure, found in a complex with XPO6, Ran, ACTB and PFN1. Interacts with ACTB. Interacts with VASP. Interacts with HTT. Interacts with SH3BGRL. Occurs in many kinds of cells as a complex with monomeric actin in a 1:1 ratio. Interacts with ACTMAP. Phosphorylation at Ser-138 reduces its affinity for G-actin and blocks its interaction with HTT, reducing its ability to inhibit androgen receptor (AR) and HTT aggregation. As to expression, expressed in epididymis (at protein level).

Its subcellular location is the cytoplasm. It localises to the cytoskeleton. Functionally, binds to actin and affects the structure of the cytoskeleton. At high concentrations, profilin prevents the polymerization of actin, whereas it enhances it at low concentrations. By binding to PIP2, it inhibits the formation of IP3 and DG. Inhibits androgen receptor (AR) and HTT aggregation and binding of G-actin is essential for its inhibition of AR. The chain is Profilin-1 (PFN1) from Homo sapiens (Human).